A 255-amino-acid chain; its full sequence is Glutamate racemase (255 aa).

Residues D7–S8 and Y39–G40 each bind substrate. C70 functions as the Proton donor/acceptor in the catalytic mechanism. N71–T72 lines the substrate pocket. Catalysis depends on C181, which acts as the Proton donor/acceptor. Substrate is bound at residue T182–H183.

This sequence belongs to the aspartate/glutamate racemases family.

It carries out the reaction L-glutamate = D-glutamate. The protein operates within cell wall biogenesis; peptidoglycan biosynthesis. In terms of biological role, provides the (R)-glutamate required for cell wall biosynthesis. The sequence is that of Glutamate racemase from Helicobacter pylori (strain P12).